The chain runs to 273 residues: MHTRTVFFISDGTGITAETFGNAILAQFDIKPRHVRLPFIDTEDKAHQAVRRINHTAELEGKKPIVFTTLVNMSVLRIIQENCQGMLLDMFGTFIRPLEGELGIKSLHRVGRFADVSLSKEYTDRIEAINFSLDHDDGQSHRDLSGADVILVGVSRSGKTPTSLYLAMQCGLKVANYPLIPEDFERKQLPPALEPHRKKIFGLTILPERLSQIRNERRPGSKYADLANCRHEVAEAEAMMRRSGIRWLSTTTKSIEEIATTILQEVRPERLVY.

153–160 (GVSRSGKT) is an ADP binding site.

It belongs to the pyruvate, phosphate/water dikinase regulatory protein family. PSRP subfamily.

The catalysed reaction is [pyruvate, water dikinase] + ADP = [pyruvate, water dikinase]-phosphate + AMP + H(+). It catalyses the reaction [pyruvate, water dikinase]-phosphate + phosphate + H(+) = [pyruvate, water dikinase] + diphosphate. Functionally, bifunctional serine/threonine kinase and phosphorylase involved in the regulation of the phosphoenolpyruvate synthase (PEPS) by catalyzing its phosphorylation/dephosphorylation. This chain is Putative phosphoenolpyruvate synthase regulatory protein, found in Paracidovorax citrulli (strain AAC00-1) (Acidovorax citrulli).